The sequence spans 421 residues: Serine hydroxymethyltransferase (421 aa).

(6S)-5,6,7,8-tetrahydrofolate-binding positions include L121 and 125–127; that span reads GHL. K229 carries the N6-(pyridoxal phosphate)lysine modification.

This sequence belongs to the SHMT family. In terms of assembly, homodimer. Pyridoxal 5'-phosphate is required as a cofactor.

The protein resides in the cytoplasm. The catalysed reaction is (6R)-5,10-methylene-5,6,7,8-tetrahydrofolate + glycine + H2O = (6S)-5,6,7,8-tetrahydrofolate + L-serine. Its pathway is one-carbon metabolism; tetrahydrofolate interconversion. It functions in the pathway amino-acid biosynthesis; glycine biosynthesis; glycine from L-serine: step 1/1. Functionally, catalyzes the reversible interconversion of serine and glycine with tetrahydrofolate (THF) serving as the one-carbon carrier. This reaction serves as the major source of one-carbon groups required for the biosynthesis of purines, thymidylate, methionine, and other important biomolecules. Also exhibits THF-independent aldolase activity toward beta-hydroxyamino acids, producing glycine and aldehydes, via a retro-aldol mechanism. This chain is Serine hydroxymethyltransferase, found in Haemophilus influenzae (strain ATCC 51907 / DSM 11121 / KW20 / Rd).